A 274-amino-acid chain; its full sequence is Phosphatidylglycerol--prolipoprotein diacylglyceryl transferase (274 aa).

The next 4 helical transmembrane spans lie at 19–39 (VGSV…VLGL), 59–79 (LAIW…VLFQ), 93–113 (IWRG…AALI), and 120–140 (VSFW…QAIG). R141 is a binding site for a 1,2-diacyl-sn-glycero-3-phospho-(1'-sn-glycerol). The next 3 helical transmembrane spans lie at 181-201 (TFLY…ALFF), 209-229 (GTIF…IEGL), and 243-263 (QVVS…LYLL).

The protein belongs to the Lgt family.

Its subcellular location is the cell inner membrane. The catalysed reaction is L-cysteinyl-[prolipoprotein] + a 1,2-diacyl-sn-glycero-3-phospho-(1'-sn-glycerol) = an S-1,2-diacyl-sn-glyceryl-L-cysteinyl-[prolipoprotein] + sn-glycerol 1-phosphate + H(+). It participates in protein modification; lipoprotein biosynthesis (diacylglyceryl transfer). Catalyzes the transfer of the diacylglyceryl group from phosphatidylglycerol to the sulfhydryl group of the N-terminal cysteine of a prolipoprotein, the first step in the formation of mature lipoproteins. The chain is Phosphatidylglycerol--prolipoprotein diacylglyceryl transferase from Acaryochloris marina (strain MBIC 11017).